The following is a 474-amino-acid chain: Phenylalanine--tRNA ligase alpha subunit (474 aa).

L-phenylalanine is bound by residues T317, 356–358 (QLE), and Y396. Mg(2+) is bound at residue E398. Residue F421 coordinates L-phenylalanine.

It belongs to the class-II aminoacyl-tRNA synthetase family. Phe-tRNA synthetase alpha subunit type 2 subfamily. In terms of assembly, tetramer of two alpha and two beta subunits. Requires Mg(2+) as cofactor.

It is found in the cytoplasm. The catalysed reaction is tRNA(Phe) + L-phenylalanine + ATP = L-phenylalanyl-tRNA(Phe) + AMP + diphosphate + H(+). The protein is Phenylalanine--tRNA ligase alpha subunit of Methanocorpusculum labreanum (strain ATCC 43576 / DSM 4855 / Z).